The sequence spans 388 residues: Flap endonuclease 1 (388 aa).

The tract at residues 1-104 is N-domain; that stretch reads MGILGLSKLI…GELAKRAERR (104 aa). Asp-34 is a Mg(2+) binding site. Arg-47 and Arg-70 together coordinate DNA. 5 residues coordinate Mg(2+): Asp-86, Glu-158, Glu-160, Asp-179, and Asp-181. Positions 122 to 253 are I-domain; that stretch reads EIEKFNRRLV…KRAIELINNY (132 aa). Glu-158 lines the DNA pocket. DNA contacts are provided by Gly-231 and Asp-233. Asp-233 lines the Mg(2+) pocket. The interaction with PCNA stretch occupies residues 336–344; sequence TQVRLDSFF. A disordered region spans residues 343-388; sequence FFKTLPSTPSATNAAKRKAEEAKKSANNKKAKTSGGGGGGRGRRPK.

This sequence belongs to the XPG/RAD2 endonuclease family. FEN1 subfamily. In terms of assembly, interacts with PCNA. Three molecules of FEN1 bind to one PCNA trimer with each molecule binding to one PCNA monomer. PCNA stimulates the nuclease activity without altering cleavage specificity. Requires Mg(2+) as cofactor. Phosphorylated. Phosphorylation upon DNA damage induces relocalization to the nuclear plasma.

Its subcellular location is the nucleus. It localises to the nucleolus. The protein resides in the nucleoplasm. It is found in the mitochondrion. In terms of biological role, structure-specific nuclease with 5'-flap endonuclease and 5'-3' exonuclease activities involved in DNA replication and repair. During DNA replication, cleaves the 5'-overhanging flap structure that is generated by displacement synthesis when DNA polymerase encounters the 5'-end of a downstream Okazaki fragment. It enters the flap from the 5'-end and then tracks to cleave the flap base, leaving a nick for ligation. Also involved in the long patch base excision repair (LP-BER) pathway, by cleaving within the apurinic/apyrimidinic (AP) site-terminated flap. Acts as a genome stabilization factor that prevents flaps from equilibrating into structures that lead to duplications and deletions. Also possesses 5'-3' exonuclease activity on nicked or gapped double-stranded DNA, and exhibits RNase H activity. Also involved in replication and repair of rDNA and in repairing mitochondrial DNA. The polypeptide is Flap endonuclease 1 (Drosophila ananassae (Fruit fly)).